The primary structure comprises 195 residues: Probable DNA-directed RNA polymerase subunit delta (195 aa).

Residues 14 to 81 (LSMIEVAHAI…GDNTWGLRAW (68 aa)) form the HTH HARE-type domain. The interval 91-195 (TVGETEDEED…DEEDKEDDEE (105 aa)) is disordered. Composition is skewed to acidic residues over residues 116–171 (TDDD…EDQL) and 179–195 (FGDD…DDEE).

The protein belongs to the RpoE family. In terms of assembly, RNAP is composed of a core of 2 alpha, a beta and a beta' subunits. The core is associated with a delta subunit and one of several sigma factors.

Functionally, participates in both the initiation and recycling phases of transcription. In the presence of the delta subunit, RNAP displays an increased specificity of transcription, a decreased affinity for nucleic acids, and an increased efficiency of RNA synthesis because of enhanced recycling. The protein is Probable DNA-directed RNA polymerase subunit delta of Limosilactobacillus fermentum (strain NBRC 3956 / LMG 18251) (Lactobacillus fermentum).